A 275-amino-acid chain; its full sequence is Nurim (275 aa).

The Nuclear portion of the chain corresponds to 1–4 (MASV). Residues 5-32 (TFRDGFLCVSALITFVFVFVTGADFVRF) traverse the membrane as a helical segment. The Perinuclear space segment spans residues 33–63 (VSFRAINHNLSGAAPLCRDSVPWSVALRDGV). The helical transmembrane segment at 64-85 (VQKAVAVDVLLLVVFSLQHSLL) threads the bilayer. Topologically, residues 86–102 (AWTPVKRVCQSVFGVLS) are nuclear. Residues 103 to 119 (RSVYCFTTAAALQILMH) traverse the membrane as a helical segment. Residues 120–138 (YWRPVTSAPCLWSVSSAPW) lie on the Perinuclear space side of the membrane. A helical membrane pass occupies residues 139-169 (EIWFPLICFIVHFLCWAIICSILLIFDYPEL). The Nuclear portion of the chain corresponds to 170-196 (LGIKQVYYECLGLGDPLLLKSERAQRL). The chain crosses the membrane as a helical span at residues 197–215 (YSHLRHPVCVELLTVLWLL). Topologically, residues 216–221 (PSFPLD) are perinuclear space. Residues 222–239 (RLLLAVFLTVYLILAHSL) traverse the membrane as a helical segment. Residues 240 to 275 (DKQDCAYLRHQLRNKLQLFSTPLEGSEQTNDNNKLE) lie on the Nuclear side of the membrane.

It belongs to the nurim family.

It is found in the nucleus inner membrane. The protein is Nurim (nrm) of Danio rerio (Zebrafish).